Consider the following 667-residue polypeptide: Flavin-dependent halogenase malA (667 aa).

FAD contacts are provided by H48, E70, I79, and S82. The active site involves K108. R144, V168, D399, and I412 together coordinate FAD. E494 contacts substrate. Zn(2+)-binding residues include C597, C600, C613, and C616. A flexible region region spans residues 621–646; sequence TEPQTAVTFDPPLTAEEEALLYAAWN.

Belongs to the flavin-dependent halogenase family. Zn(2+) is required as a cofactor.

It catalyses the reaction (+)-premalbrancheamide + 2 FAD + 2 chloride + 4 H(+) = (+)-malbrancheamide + 2 FADH2. It carries out the reaction (+)-premalbrancheamide + FAD + chloride + 2 H(+) = (+)-malbrancheamide B + FADH2. The enzyme catalyses (+)-premalbrancheamide + FAD + chloride + 2 H(+) = (+)-isomalbrancheamide B + FADH2. The catalysed reaction is (+)-malbrancheamide B + FAD + chloride + 2 H(+) = (+)-malbrancheamide + FADH2. It catalyses the reaction (+)-isomalbrancheamide B + FAD + chloride + 2 H(+) = (+)-malbrancheamide + FADH2. It carries out the reaction (+)-premalbrancheamide + bromide + FAD + 2 H(+) = (+)-malbrancheamide C + FADH2. The enzyme catalyses (+)-premalbrancheamide + bromide + FAD + 2 H(+) = (+)-isomalbrancheamide C + FADH2. The catalysed reaction is (+)-malbrancheamide B + bromide + FAD + 2 H(+) = (+)-malbrancheamide D + FADH2. It catalyses the reaction (+)-isomalbrancheamide B + bromide + FAD + 2 H(+) = (+)-isomalbrancheamide D + FADH2. The protein operates within alkaloid biosynthesis. In terms of biological role, flavin-dependent halogenase; part of the gene cluster that mediates the biosynthesis of malbrancheamide, a dichlorinated fungal indole alkaloid that belongs to a family of natural products containing a characteristic bicyclo[2.2.2]diazaoctane core. The first step of malbrancheamide biosynthesis involves coupling of L-proline and L-tryptophan by malG, a bimodular NRPS, to produce L-Pro-L-Trp aldehyde through reductive offloading. This compound undergoes spontaneous cyclization and dehydration to give a dienamine which is reverse prenylated at C-2 by malE. The other prenyltransferase present in the cluster, malB, displays modest activity, suggesting that may be a redundant gene in the pathway. Subsequently, a [4+2] Diels-Alder cyclo-addition catalyzed by the bifunctional enzyme malC forms the characteristic bicyclo[2.2.2]diazaoctane ring of premalbrancheamid. Finally, the flavin-dependent halogenase malA catalyzes the iterative dichlorination of the indole ring of premalbrancheamide to yield C-9 monochlorinated malbrancheamide B, C-8 monochlorinated isomalbrancheamide B, and dichlorinated malbrancheamide. MalA is also able to brominate premalbrancheamide at C-9 to yield malbrancheamide C, and, to a lesser extend, at C-8 to yield isomalbrancheamide C. Finally, malA can brominate C-9 monochlorinated malbrancheamide B at C-8 to yield malbrancheamide D, or C-8 monochlorinated isomalbrancheamide B at C-9 to produce isomalbrancheamide D. In Malbranchea aurantiaca, this protein is Flavin-dependent halogenase malA.